The chain runs to 177 residues: Large ribosomal subunit protein uL6 (177 aa).

This sequence belongs to the universal ribosomal protein uL6 family. Part of the 50S ribosomal subunit.

Functionally, this protein binds to the 23S rRNA, and is important in its secondary structure. It is located near the subunit interface in the base of the L7/L12 stalk, and near the tRNA binding site of the peptidyltransferase center. This chain is Large ribosomal subunit protein uL6, found in Aliivibrio fischeri (strain MJ11) (Vibrio fischeri).